The sequence spans 2715 residues: Teneurin-3 (2715 aa).

2 disordered regions span residues 1-38 (MDVKERRPYCSLTKSRREKERRYTNSSADNEECRVPTQ) and 142-223 (GRSS…AALP). Residues 1 to 309 (MDVKERRPYC…KSSKYCSWRC (309 aa)) enclose the Teneurin N-terminal domain. Over 1–310 (MDVKERRPYC…SSKYCSWRCT (310 aa)) the chain is Cytoplasmic. Residues 142 to 153 (GRSSCLSSRSNS) show a composition bias toward low complexity. Positions 159 to 168 (DTEHENRSDS) are enriched in basic and acidic residues. Polar residues predominate over residues 171 to 182 (EQPSNNPGQPTL). Residues 201–213 (TSLNRNSLTNRRN) are compositionally biased toward low complexity. Residues 311–331 (ALCAVGVSVLLAILLSYFIAM) traverse the membrane as a helical segment. At 332–2715 (HLFGLNWHLQ…FLRQSEIGKR (2384 aa)) the chain is on the extracellular side. N-linked (GlcNAc...) asparagine glycosylation is found at Asn345, Asn380, and Asn419. EGF-like domains are found at residues 514–545 (SVVECPRNCHGNGECVSGTCHCFPGFLGPDCS), 546–576 (RAACPVLCSGNGQYSKGRCLCFSGWKGTECD), 578–610 (PTTQCIDPQCGGRGICIMGSCACNSGYKGENCE), 611–642 (EADCLDPGCSNHGVCIHGECHCNPGWGGSNCE), 644–677 (LKTMCADQCSGHGTYLQESGSCTCDPNWTGPDCS), 678–709 (NEICSVDCGSHGVCMGGSCRCEEGWTGPACNQ), 710–739 (RACHPRCAEHGTCKDGKCECSQGWNGEHCT), and 740–783 (IAHY…AGCD). Intrachain disulfides connect Cys518–Cys528, Cys522–Cys533, Cys535–Cys544, Cys553–Cys564, Cys566–Cys575, Cys582–Cys593, Cys587–Cys598, Cys600–Cys609, Cys614–Cys625, Cys619–Cys630, Cys632–Cys641, Cys652–Cys665, Cys667–Cys676, Cys681–Cys691, Cys685–Cys696, Cys698–Cys707, Cys712–Cys722, Cys716–Cys727, Cys729–Cys738, Cys752–Cys762, Cys756–Cys771, and Cys773–Cys782. N-linked (GlcNAc...) asparagine glycosylation occurs at Asn670. 2 N-linked (GlcNAc...) asparagine glycosylation sites follow: Asn869 and Asn892. Residues 1181-1209 (LLAPVALACGIDGSLYVGDFNYVRRIFPS) form an NHL 1 repeat. A glycan (N-linked (GlcNAc...) asparagine) is linked at Asn1211. NHL repeat units lie at residues 1216–1260 (LELR…PKSL), 1286–1330 (ARCG…NGII), 1347–1387 (CDTS…ITEN), 1418–1445 (LESATAIAVSYSGVLYITETDEKKINRI), and 1474–1517 (CYQS…VSKN). Residues 1527–1546 (YEVASPTDQELYIFDINGTH) form a YD 1 repeat. 2 N-linked (GlcNAc...) asparagine glycosylation sites follow: Asn1543 and Asn1560. 3 YD repeats span residues 1563 to 1583 (YSNDNDVTAVTDSNGNTLRIR), 1626 to 1645 (YHGNSGLLATKSDETGWTTF), and 1646 to 1668 (FDYDSEGRLTNVTFPTGVVTNLH). Residues Asn1656, Asn1693, Asn1751, and Asn1836 are each glycosylated (N-linked (GlcNAc...) asparagine). 18 YD repeats span residues 1839–1858 (YSSTGQIASIQRGTTSEKVD), 1880–1898 (YLEKSMVLLLHSQRQYIFE), 1899–1919 (YDMWDRLSAITMPSVARHTMQ), 1926–1943 (YYRNIYNPPESNASIITD), 1944–1965 (YNEEGLLLQTAFLGTSRRVLFK), 1966–1983 (YRRQTRLSEILYDSTRVS), 1986–2006 (YDETAGVLKTVNLQSDGFICT), 2009–2029 (YRQIGPLIDRQIFRFSEDGMV), 2037–2056 (YDNSFRVTSMQGVINETPLP), 2062–2079 (FDDISGKVEQFGKFGVIY), 2080–2106 (YDINQIISTAVMTYTKHFDAHGRIKEI), 2108–2121 (YEIFRSLMYWITIQ), 2122–2145 (YDNMGRVTKREIKIGPFANTTKYA), 2148–2168 (YDVDGQLQTVYLNEKIMWRYN), 2169–2189 (YDLNGNLHLLNPSSSARLTPL), 2191–2211 (YDLRDRITRLGDVQYRLDEDG), 2223–2243 (YSSKGLLTRVYSKGSGWTVIY), and 2245–2265 (YDGLGRRVSSKTSLGQHLQFF). N-linked (GlcNAc...) asparagine glycosylation occurs at Asn1937. An N-linked (GlcNAc...) asparagine glycan is attached at Asn2140. N-linked (GlcNAc...) asparagine glycosylation occurs at Asn2280. Residues 2291–2332 (YDLQGHLFAMEISSGDEFYIASDNTGTPLAVFSSNGLMLKQT) form a YD 23 repeat. A glycan (N-linked (GlcNAc...) asparagine) is linked at Asn2592.

This sequence belongs to the tenascin family. Teneurin subfamily. In terms of assembly, homodimer; disulfide-linked; to mediate homophilic cell adhesion. Most isoforms (isoform-type A and type-B) can mediate homophilic interaction. Heterodimer with either TENM1 or TENM2. May also form heterodimer with TENM4. Isoform A0B0: Does not form homodimer to mediate homophilic cell adhesion. Isoform A0B0: Heterodimer with ADGRL3. In terms of tissue distribution, in brain, expressed in highly specific regions of the postnatal brain: expressed in restricted domains of the developing hippocampal region, including proximal CA1, distal subiculum, and medial entorhinal cortex (at protein level). Expression matches with topographic connectivity between entorhinal cortex, CA1, and subiculum (at protein level). Also specifically expressed in subregions of the presubiculum, parasubiculum, medial mammillary nucleus and anteroventral thalamic nucleus that are topographically connected with subiculum or entorhinal cortex (at protein level). Expressed in neurons of the developing visual pathway (at protein level). Expressed in the dorsal and ventral lateral geniculate nucleus (dLGN and vLGN) and optic tract at birth. Expressed in ipsilateral retinal axons of terminal zones (TZs) in the developing superior colliculus (SC) throughout the first postnatal week. Expressed in the layer V of the visual caudal cortex. Expressed in the femoral and mandibular condylar cartilages. Strongly expressed in fibrous and proliferating chondrocytes. Poorly expressed in mature chondrocytes. Not expressed in hypertrophic chondrocytes.

Its subcellular location is the cell membrane. It localises to the cell projection. The protein localises to the axon. Its function is as follows. Involved in neural development by regulating the establishment of proper connectivity within the nervous system. Acts in both pre- and postsynaptic neurons in the hippocampus to control the assembly of a precise topographic projection: required in both CA1 and subicular neurons for the precise targeting of proximal CA1 axons to distal subiculum, probably by promoting homophilic cell adhesion. Promotes homophilic adhesion in a splicing isoform-dependent manner: most isoforms (isoform-type A and type-B) can mediate homophilic interaction. Promotes axon guidance. Required for proper dendrite morphogenesis and axon targeting in the vertebrate visual system, thereby playing a key role in the development of the visual pathway. Regulates the formation in ipsilateral retinal mapping to both the dorsal lateral geniculate nucleus (dLGN) and the superior colliculus (SC). May also be involved in the differentiation of the fibroblast-like cells in the superficial layer of mandibular condylar cartilage into chondrocytes. This Mus musculus (Mouse) protein is Teneurin-3.